The sequence spans 32 residues: U6-ctenitoxin-Pr1a (32 aa).

3 disulfide bridges follow: Cys3–Cys17, Cys10–Cys21, and Cys16–Cys30.

Expressed by the venom gland.

The protein localises to the secreted. The protein is U6-ctenitoxin-Pr1a of Phoneutria reidyi (Brazilian Amazonian armed spider).